The chain runs to 729 residues: Circadian input-output histidine kinase CikA (729 aa).

The tract at residues 1-169 is N-terminal domain; the sequence is MPQPIFDRIL…QVTTQIRQSL (169 aa). A GAF domain region spans residues 170–314; the sequence is ELPELLKIAV…VEFLTHLSQH (145 aa). In terms of domain architecture, Histidine kinase spans 366 to 587; it reads TMSHELRTPL…TFTVGLPAIS (222 aa). His-369 carries the post-translational modification Phosphohistidine; by autocatalysis. Residues 613 to 729 form a psR domain, binds KaiB region; it reads EGRIVLVSED…GLTSLATSAQ (117 aa).

It in the N-terminal section; belongs to the phytochrome family. As to quaternary structure, homodimer. Part of the circadian clock (KaiA, KaiB, KaiC, CikA, RpaA, SasA), the composition of which varies during the circadian cycle. KaiA and CikA compete for binding to KaiB(fs). The PsR domain binds the KaiB:KaiC CI complex but poorly to either protein alone. KaiA and CikA bind to the same region of the KaiB(fs) form and therefore compete.

The catalysed reaction is ATP + protein L-histidine = ADP + protein N-phospho-L-histidine.. Functions in an input pathway to the Kai circadian clock. Senses oxidized quinones via its C-terminal pseudo-receiver domain, providing a link between cell metabolism and the clock. Affects the ratio of phosphorylated to unphosphorylated KaiC, binds quinones via its pseudo-receptor domain. Quinone-binding destabilizes the protein rapidly. Autophosphorylates, does not transfer the phosphate to its pseudo-receiver (PsR) domain. May play a role in cell division. Functionally, also functions in a two-component CikA/RpaA output pathway from the circadian clock, negatively regulating kaiBC expression independently of labA and of sasA. One of three clock output pathways. Dephosphorylates phospho-RpaA, enhanced by KaiB and KaiC, has only modest kinase activity on RpaA. In Thermosynechococcus vestitus (strain NIES-2133 / IAM M-273 / BP-1), this protein is Circadian input-output histidine kinase CikA.